Reading from the N-terminus, the 178-residue chain is Peptide methionine sulfoxide reductase MsrA (178 aa).

Residue cysteine 12 is part of the active site.

Belongs to the MsrA Met sulfoxide reductase family.

It carries out the reaction L-methionyl-[protein] + [thioredoxin]-disulfide + H2O = L-methionyl-(S)-S-oxide-[protein] + [thioredoxin]-dithiol. It catalyses the reaction [thioredoxin]-disulfide + L-methionine + H2O = L-methionine (S)-S-oxide + [thioredoxin]-dithiol. Has an important function as a repair enzyme for proteins that have been inactivated by oxidation. Catalyzes the reversible oxidation-reduction of methionine sulfoxide in proteins to methionine. The protein is Peptide methionine sulfoxide reductase MsrA of Erwinia tasmaniensis (strain DSM 17950 / CFBP 7177 / CIP 109463 / NCPPB 4357 / Et1/99).